A 337-amino-acid polypeptide reads, in one-letter code: DNA-directed RNA polymerase subunit alpha (337 aa).

The tract at residues 1-233 is alpha N-terminal domain (alpha-NTD); that stretch reads MIQKNWQELI…DQLSIFVNFE (233 aa). Residues 249-337 are alpha C-terminal domain (alpha-CTD); sequence FNPALLKKVD…DLAKRYEDQY (89 aa).

It belongs to the RNA polymerase alpha chain family. Homodimer. The RNAP catalytic core consists of 2 alpha, 1 beta, 1 beta' and 1 omega subunit. When a sigma factor is associated with the core the holoenzyme is formed, which can initiate transcription.

It catalyses the reaction RNA(n) + a ribonucleoside 5'-triphosphate = RNA(n+1) + diphosphate. In terms of biological role, DNA-dependent RNA polymerase catalyzes the transcription of DNA into RNA using the four ribonucleoside triphosphates as substrates. The polypeptide is DNA-directed RNA polymerase subunit alpha (Brucella abortus (strain S19)).